The following is a 99-amino-acid chain: Large ribosomal subunit protein uL23 (99 aa).

Belongs to the universal ribosomal protein uL23 family. In terms of assembly, part of the 50S ribosomal subunit. Contacts protein L29, and trigger factor when it is bound to the ribosome.

One of the early assembly proteins it binds 23S rRNA. One of the proteins that surrounds the polypeptide exit tunnel on the outside of the ribosome. Forms the main docking site for trigger factor binding to the ribosome. This is Large ribosomal subunit protein uL23 from Pseudomonas savastanoi pv. phaseolicola (strain 1448A / Race 6) (Pseudomonas syringae pv. phaseolicola (strain 1448A / Race 6)).